The following is a 169-amino-acid chain: uncharacterized protein (169 aa).

2 helical membrane-spanning segments follow: residues 10–30 (NVHMYDVAIILILIIVVFKLI) and 149–169 (IPLAFVQMIAISIALICLLIP).

It localises to the membrane. This is an uncharacterized protein from Dictyostelium discoideum (Social amoeba).